A 1350-amino-acid polypeptide reads, in one-letter code: uncharacterized protein (1350 aa).

Disordered stretches follow at residues 348–371 (SLVGAPSPSERVMKRKSERPLDDS) and 923–944 (SKMEGGERDATGSSMDTVRGTG). Over residues 923–932 (SKMEGGERDA) the composition is skewed to basic and acidic residues.

This is an uncharacterized protein from Ictalurid herpesvirus 1 (strain Auburn) (IcHV-1).